The primary structure comprises 64 residues: Prokaryotic ubiquitin-like protein Pup (64 aa).

Positions 1–37 are disordered; the sequence is MAQEQTQRAGGGEDDETTGGDGSAGQERREKLAAETD. Residues 21–58 form an ARC ATPase binding region; that stretch reads DGSAGQERREKLAAETDDLLDEIDDVLEENAEDFVRAY. Residues 24 to 52 are a coiled coil; sequence AGQERREKLAAETDDLLDEIDDVLEENAE. At glutamine 64 the chain carries Deamidated glutamine. Glutamine 64 participates in a covalent cross-link: Isoglutamyl lysine isopeptide (Gln-Lys) (interchain with K-? in acceptor proteins).

Belongs to the prokaryotic ubiquitin-like protein family. Strongly interacts with the proteasome-associated ATPase ARC through a hydrophobic interface; the interacting region of Pup lies in its C-terminal half. There is one Pup binding site per ARC hexamer ring. In terms of processing, is modified by deamidation of its C-terminal glutamine to glutamate by the deamidase Dop, a prerequisite to the subsequent pupylation process.

Its pathway is protein degradation; proteasomal Pup-dependent pathway. Functionally, protein modifier that is covalently attached to lysine residues of substrate proteins, thereby targeting them for proteasomal degradation. The tagging system is termed pupylation. The protein is Prokaryotic ubiquitin-like protein Pup of Rhodococcus erythropolis (strain PR4 / NBRC 100887).